A 160-amino-acid polypeptide reads, in one-letter code: SsrA-binding protein (160 aa).

This sequence belongs to the SmpB family.

The protein localises to the cytoplasm. Functionally, required for rescue of stalled ribosomes mediated by trans-translation. Binds to transfer-messenger RNA (tmRNA), required for stable association of tmRNA with ribosomes. tmRNA and SmpB together mimic tRNA shape, replacing the anticodon stem-loop with SmpB. tmRNA is encoded by the ssrA gene; the 2 termini fold to resemble tRNA(Ala) and it encodes a 'tag peptide', a short internal open reading frame. During trans-translation Ala-aminoacylated tmRNA acts like a tRNA, entering the A-site of stalled ribosomes, displacing the stalled mRNA. The ribosome then switches to translate the ORF on the tmRNA; the nascent peptide is terminated with the 'tag peptide' encoded by the tmRNA and targeted for degradation. The ribosome is freed to recommence translation, which seems to be the essential function of trans-translation. The polypeptide is SsrA-binding protein (Haemophilus ducreyi (strain 35000HP / ATCC 700724)).